We begin with the raw amino-acid sequence, 972 residues long: MTDTTKIDYSKTLYLPQTEFPMRAGLPQREPLFVQRWEEMNLYKKLREQAKDRPLYVLHDGPPYANGNIHIGHALNKILKDVITRSFQMRGYNSNYVPGWDCHGLPIEWKIEEKYRAAGKNKDEVPINEFRKECREFASNWIKVQTEEFKRLAILGDFENPYTTMNFHAEARIAGELLKFAASGQLYRGSKPVMWSVVERTALAEAEVEYHDIESDMIWVKFPVAGEVATENDLSGSAVVIWTTTPWTIPGNRAVSYSSRIEYGLFEITEAENDFGPRPGERLVFADKLVEECCAKAKLQFKRLRSVSAEELGKIVLDHPLKGFGGGYEFVVPMLDGDHVTDDAGTGFVHTAPSHGREDFEAWMDNARQLEARGIDPNIPFPVGDDGFYTKDAPGFGPDREGGPARVIDDNGKKGDANKVVIEQLIAADKLFARGRLKHSYPHSWRSKKPVIFRNTPQWFVYMDKNLGDGTTLRSRALKAIDETRFVPAAGQTRLRSMIEGRPDWVLSRQRAWGVPICVFVDEEGNILQDDAVNKRIMDAFEKEGADAWFADGARERFLGARAGEGWTQVRDILDVWFDSGSTHTFTLEDRPDLKWPADVYLEGSDQHRGWFHSSLLESCGTRGRAPYNAVVTHGFTMDEHGKKMSKSLGNTVTPQDVIKESGADILRLWVMTTDYWEDQRLGKSIIQTNIDAYRKLRNTIRWMLGTLAHDEGENVAYADLPELERLMLHRLTELDELVRSGYDTFDFKRIARALVDFMNVELSAFYFDIRKDALYCDAPSSIRRKAALQTVREIFVRLTTWLAPMLPFTMEEAWLDRYPQSVSIHAEQFRPTPAEWRDDVLAEKWRKVRAVRRVVTGALELERADKRIGSSLEAAPVVYIADKSLSDSLEGLDFAEICITSGISVSDAAAPEGAFTLGDVKGVAVVPERAKGEKCARSWRYTTDVGADPEFPEVSARDAAALRELQALGKL.

The 'HIGH' region motif lies at 63–73 (PYANGNIHIGH). Residue glutamate 603 coordinates L-isoleucyl-5'-AMP. The 'KMSKS' region motif lies at 644–648 (KMSKS). Residue lysine 647 participates in ATP binding.

It belongs to the class-I aminoacyl-tRNA synthetase family. IleS type 1 subfamily. As to quaternary structure, monomer.

The protein localises to the cytoplasm. It carries out the reaction tRNA(Ile) + L-isoleucine + ATP = L-isoleucyl-tRNA(Ile) + AMP + diphosphate. In terms of biological role, catalyzes the attachment of isoleucine to tRNA(Ile). As IleRS can inadvertently accommodate and process structurally similar amino acids such as valine, to avoid such errors it has two additional distinct tRNA(Ile)-dependent editing activities. One activity is designated as 'pretransfer' editing and involves the hydrolysis of activated Val-AMP. The other activity is designated 'posttransfer' editing and involves deacylation of mischarged Val-tRNA(Ile). The sequence is that of Isoleucine--tRNA ligase from Brucella abortus (strain 2308).